Consider the following 211-residue polypeptide: Secreted phosphoprotein 24 (211 aa).

An N-terminal signal peptide occupies residues 1-29; that stretch reads MISRMEKMTMMMKILIMFALGMNYWSCSG. 2 cysteine pairs are disulfide-bonded: C92-C103 and C116-C134. S96 carries the post-translational modification Phosphoserine. 5 positions are modified to phosphoserine: S145, S146, S170, S173, and S182.

The protein belongs to the SPP2 family. Phosphorylation sites are present in the extracellular medium. Detected in liver and plasma.

Its subcellular location is the secreted. Functionally, could coordinate an aspect of bone turnover. The chain is Secreted phosphoprotein 24 (SPP2) from Homo sapiens (Human).